Consider the following 441-residue polypeptide: Chromosomal replication initiator protein DnaA (441 aa).

Residues Met1 to Ile80 are domain I, interacts with DnaA modulators. The domain II stretch occupies residues Ile80–Asn102. The domain III, AAA+ region stretch occupies residues Ile103–Ser320. ATP is bound by residues Gly147, Gly149, Lys150, and Thr151. The segment at Ser321 to Glu441 is domain IV, binds dsDNA.

Belongs to the DnaA family. Oligomerizes as a right-handed, spiral filament on DNA at oriC.

It is found in the cytoplasm. In terms of biological role, plays an essential role in the initiation and regulation of chromosomal replication. ATP-DnaA binds to the origin of replication (oriC) to initiate formation of the DNA replication initiation complex once per cell cycle. Binds the DnaA box (a 9 base pair repeat at the origin) and separates the double-stranded (ds)DNA. Forms a right-handed helical filament on oriC DNA; dsDNA binds to the exterior of the filament while single-stranded (ss)DNA is stabiized in the filament's interior. The ATP-DnaA-oriC complex binds and stabilizes one strand of the AT-rich DNA unwinding element (DUE), permitting loading of DNA polymerase. After initiation quickly degrades to an ADP-DnaA complex that is not apt for DNA replication. Binds acidic phospholipids. This is Chromosomal replication initiator protein DnaA from Desulforamulus reducens (strain ATCC BAA-1160 / DSM 100696 / MI-1) (Desulfotomaculum reducens).